An 837-amino-acid polypeptide reads, in one-letter code: Exonuclease 1 (837 aa).

Positions 1–99 (MGIQGLLQFI…RSRRERRQSN (99 aa)) are N-domain. Positions 30, 78, 150, 152, 171, 173, and 225 each coordinate Mg(2+). Positions 129 to 386 (MAHKVIKAAR…RLEVNSVSHA (258 aa)) are interaction with MSH3. Residues 138–229 (RALGVDCLVA…ILSGCDYLAS (92 aa)) form an I-domain region. Disordered regions lie at residues 345–367 (TMPA…PGTN) and 440–477 (IKEN…PSKM). The interaction with MLH1 stretch occupies residues 387-488 (PQLKEKPSTL…NKFATFLQRR (102 aa)). A compositionally biased stretch (polar residues) spans 449–462 (TSPNSSKMSKSCPD). Lys480 is modified (N6-acetyllysine). Positions 555 to 589 (NGTHNLSSQIPGNAAVSPEDEAQSSETSKLLGAMS) are disordered. Residues 556-565 (GTHNLSSQIP) are compositionally biased toward polar residues. Ser589 and Ser601 each carry phosphoserine. An interaction with MSH2 region spans residues 591–837 (PSLGTLRSCF…CVRAQRAIFH (247 aa)). A disordered region spans residues 608 to 740 (EFSRTPSPSA…GLCRSSSMDS (133 aa)). 3 stretches are compositionally biased toward polar residues: residues 611–623 (RTPS…TLQQ), 665–690 (SSRS…SSRD), and 699–713 (NNKS…NSKQ). The residue at position 612 (Thr612) is a Phosphothreonine. Ser614 and Ser666 each carry phosphoserine. At Ser737 the chain carries Phosphoserine. An interaction with MLH1 region spans residues 778 to 837 (LQTKISELWKNFGFKKDSEKLPSCKKPLSPVKDNIQLTPETEDEIFNKPECVRAQRAIFH).

This sequence belongs to the XPG/RAD2 endonuclease family. EXO1 subfamily. Interacts with the MLH1-PMS2 heterodimer via MLH1. Interacts with MSH3. Interacts with the MSH2-MSH6 heterodimer via MSH2, and this interaction may increase the processivity of the 5'-&gt;3' exonuclease activity. Interacts with PCNA, and this interaction may both stimulate the cryptic 3'-&gt;5' exonuclease activity and suppress the 5'-&gt;3' exonuclease activity. Interacts with WRN, and this interaction stimulates both the 5'-&gt;3' exonuclease activity and cleavage of 5'-overhanging flap structures. Interacts with RECQL/RECQ1, and this interaction stimulates cleavage of 5'-overhanging flap structures. Interacts with DNA helicase ZGRF1; the interaction is increased following DNA damage induction. It depends on Mg(2+) as a cofactor. Post-translationally, phosphorylated upon DNA damage and in response to agents stalling DNA replication, probably by ATM or ATR. In terms of tissue distribution, highly expressed in the spleen and testis. Also expressed in the bone marrow, brain, lung, lymph node and thymus.

It localises to the nucleus. Functionally, 5'-&gt;3' double-stranded DNA exonuclease which may also possess a cryptic 3'-&gt;5' double-stranded DNA exonuclease activity. Functions in DNA mismatch repair (MMR) to excise mismatch-containing DNA tracts directed by strand breaks located either 5' or 3' to the mismatch. Also exhibits endonuclease activity against 5'-overhanging flap structures similar to those generated by displacement synthesis when DNA polymerase encounters the 5'-end of a downstream Okazaki fragment. Required for somatic hypermutation (SHM) and class switch recombination (CSR) of immunoglobulin genes. Essential for male and female meiosis. The polypeptide is Exonuclease 1 (Exo1) (Mus musculus (Mouse)).